The primary structure comprises 83 residues: Cytochrome b559 subunit alpha (83 aa).

The chain crosses the membrane as a helical span at residues 21-35 (IIHSITIPSLFIAGW). Heme is bound at residue H23.

As to quaternary structure, heterodimer of an alpha subunit and a beta subunit. PSII is composed of 1 copy each of membrane proteins PsbA, PsbB, PsbC, PsbD, PsbE, PsbF, PsbH, PsbI, PsbJ, PsbK, PsbL, PsbM, PsbT, PsbX, PsbY, PsbZ, Psb30/Ycf12, at least 3 peripheral proteins of the oxygen-evolving complex and a large number of cofactors. It forms dimeric complexes. Heme b serves as cofactor.

It is found in the plastid. The protein resides in the chloroplast thylakoid membrane. In terms of biological role, this b-type cytochrome is tightly associated with the reaction center of photosystem II (PSII). PSII is a light-driven water:plastoquinone oxidoreductase that uses light energy to abstract electrons from H(2)O, generating O(2) and a proton gradient subsequently used for ATP formation. It consists of a core antenna complex that captures photons, and an electron transfer chain that converts photonic excitation into a charge separation. This chain is Cytochrome b559 subunit alpha, found in Pisum sativum (Garden pea).